Consider the following 308-residue polypeptide: HPr kinase/phosphorylase (308 aa).

Residues H138 and K159 contribute to the active site. Position 153-160 (153-160 (GESGLGKS)) interacts with ATP. S160 is a binding site for Mg(2+). The active-site Proton acceptor; for phosphorylation activity. Proton donor; for dephosphorylation activity is D177. An important for the catalytic mechanism of both phosphorylation and dephosphorylation region spans residues 201–210 (LEVRGLGLLD). E202 serves as a coordination point for Mg(2+). R243 is an active-site residue. The segment at 264 to 269 (QVAAGR) is important for the catalytic mechanism of dephosphorylation.

This sequence belongs to the HPrK/P family. In terms of assembly, homohexamer. Mg(2+) serves as cofactor.

It carries out the reaction [HPr protein]-L-serine + ATP = [HPr protein]-O-phospho-L-serine + ADP + H(+). It catalyses the reaction [HPr protein]-O-phospho-L-serine + phosphate + H(+) = [HPr protein]-L-serine + diphosphate. In terms of biological role, catalyzes the ATP- as well as the pyrophosphate-dependent phosphorylation of a specific serine residue in HPr, a phosphocarrier protein of the phosphoenolpyruvate-dependent sugar phosphotransferase system (PTS). HprK/P also catalyzes the pyrophosphate-producing, inorganic phosphate-dependent dephosphorylation (phosphorolysis) of seryl-phosphorylated HPr (P-Ser-HPr). This chain is HPr kinase/phosphorylase, found in Bordetella avium (strain 197N).